We begin with the raw amino-acid sequence, 33 residues long: Mu/delta-theraphotoxin-Pm2a (33 aa).

3 disulfide bridges follow: C2/C16, C9/C21, and C15/C27. F33 carries the post-translational modification Phenylalanine amide.

In terms of tissue distribution, expressed by the venom gland.

The protein resides in the secreted. Functionally, gating-modifier toxin with very weak activity on Nav1.7/SCN9A and Nav1.8/SCN10A. Shows 22% peak current inhibition (at 10 uM) on Nav1.8/SCN10A sodium channels. Show peak current inhibition and delays fast inactivation on Nav1.7/SCN9A (EC(50)&gt;10 uM). In Poecilotheria metallica (Metallic blue ornamental tree spider), this protein is Mu/delta-theraphotoxin-Pm2a.